A 388-amino-acid chain; its full sequence is Outer membrane protein assembly factor BamB (388 aa).

Positions Met-1–Ala-21 are cleaved as a signal peptide. Cys-22 carries N-palmitoyl cysteine lipidation. Cys-22 is lipidated: S-diacylglycerol cysteine.

The protein belongs to the BamB family. As to quaternary structure, part of the Bam complex.

The protein localises to the cell outer membrane. Its function is as follows. Part of the outer membrane protein assembly complex, which is involved in assembly and insertion of beta-barrel proteins into the outer membrane. The chain is Outer membrane protein assembly factor BamB from Kangiella koreensis (strain DSM 16069 / JCM 12317 / KCTC 12182 / SW-125).